Reading from the N-terminus, the 193-residue chain is Bcl-2-binding component 3 (193 aa).

Disordered stretches follow at residues 1-32 (MARA…RLMP) and 71-131 (ALGG…VEEE). Phosphoserine is present on Ser10. The BH3 motif lies at 137 to 151 (IGAQLRRMADDLNAQ).

It belongs to the Bcl-2 family. Interacts with MCL1 and BCL2A1. Interacts (via BH3 domain) with BCL2 and BCL2L1/BCL-XL. Interacts (via BH3 domain) with NOL3/ARC (via CARD domain); this interaction prevents BBC3 association with BCL2 and results in CASP8 activation.

Its subcellular location is the mitochondrion. Its function is as follows. Essential mediator of p53/TP53-dependent and p53/TP53-independent apoptosis. Promotes partial unfolding of BCL2L1 and dissociation of BCL2L1 from p53/TP53, releasing the bound p53/TP53 to induce apoptosis. Regulates ER stress-induced neuronal apoptosis. The protein is Bcl-2-binding component 3 (Bbc3) of Rattus norvegicus (Rat).